Reading from the N-terminus, the 740-residue chain is ATP-dependent RNA helicase DDX1 (740 aa).

Residues 1-295 (MAAFSEMGVM…APKALIVEPS (295 aa)) are necessary for interaction with HNRNPK. Residues 1-448 (MAAFSEMGVM…DTVHHVVVPV (448 aa)) form an interaction with dsRNA region. The interval 1 to 525 (MAAFSEMGVM…KIDCDNLEQY (525 aa)) is necessary for interaction with RELA. The Helicase ATP-binding domain occupies 2-428 (AAFSEMGVMP…SEKIMHFPTW (427 aa)). 46–53 (AETGSGKT) is a binding site for ATP. The B30.2/SPRY domain maps to 70–247 (DQQEGKKGKA…LKFNFGEEEF (178 aa)). Residues Lys-239 and Lys-268 each carry the N6-acetyllysine modification. Lys-281 bears the N6-acetyllysine; alternate mark. Lys-281 participates in a covalent cross-link: Glycyl lysine isopeptide (Lys-Gly) (interchain with G-Cter in SUMO2); alternate. The short motif at 370 to 373 (DEAD) is the DEAD box element. Ser-481 is subject to Phosphoserine. One can recognise a Helicase C-terminal domain in the interval 493-681 (KGEYAVRAIK…QVEPDIKVPV (189 aa)). The necessary for interaction with HNRNPK stretch occupies residues 525-740 (YFMQQGGGPD…YLPNQLFRTF (216 aa)).

Belongs to the DEAD box helicase family. DDX1 subfamily. Found in a multi-helicase-TICAM1 complex at least composed of DHX36, DDX1, DDX21 and TICAM1; this complex exists in resting cells with or without poly(I:C) RNA ligand stimulation. Interacts with DHX36. Interacts (via B30.2/SPRY domain) with DDX21 (via N-terminus); this interaction serves as bridges to TICAM1. Interacts with FAM98A (via N- and C-terminus). Interacts with PHF5A (via C-terminus). Interacts with MBNL1. Interacts with CSTF2. Interacts with HNRNPK. Interacts with ATM. Interacts with RELA (via C-terminus). Component of the tRNA-splicing ligase complex. Interacts with PQBP1. Interacts with ERCC6. In terms of processing, phosphorylated by ATM kinase; phosphorylation is increased in response to ionizing radiation (IR).

It localises to the nucleus. The protein localises to the cytoplasm. Its subcellular location is the cytoplasmic granule. It is found in the cytosol. The protein resides in the mitochondrion. The enzyme catalyses ATP + H2O = ADP + phosphate + H(+). In terms of biological role, acts as an ATP-dependent RNA helicase, able to unwind both RNA-RNA and RNA-DNA duplexes. Possesses 5' single-stranded RNA overhang nuclease activity. Possesses ATPase activity on various RNA, but not DNA polynucleotides. May play a role in RNA clearance at DNA double-strand breaks (DSBs), thereby facilitating the template-guided repair of transcriptionally active regions of the genome. Together with RELA, acts as a coactivator to enhance NF-kappa-B-mediated transcriptional activation. Acts as a positive transcriptional regulator of cyclin CCND2 expression. Binds to the cyclin CCND2 promoter region. Associates with chromatin at the NF-kappa-B promoter region via association with RELA. Binds to poly(A) RNA. May be involved in 3'-end cleavage and polyadenylation of pre-mRNAs. Component of the tRNA-splicing ligase complex required to facilitate the enzymatic turnover of catalytic subunit RTCB: together with archease (ZBTB8OS), acts by facilitating the guanylylation of RTCB, a key intermediate step in tRNA ligation. Component of a multi-helicase-TICAM1 complex that acts as a cytoplasmic sensor of viral double-stranded RNA (dsRNA) and plays a role in the activation of a cascade of antiviral responses including the induction of pro-inflammatory cytokines via the adapter molecule TICAM1. Specifically binds (via helicase ATP-binding domain) on both short and long poly(I:C) dsRNA. The protein is ATP-dependent RNA helicase DDX1 (Ddx1) of Rattus norvegicus (Rat).